Here is a 270-residue protein sequence, read N- to C-terminus: Putative postmeiotic segregation increased 2-like protein 11 (270 aa).

Belongs to the DNA mismatch repair MutL/HexB family.

The protein is Putative postmeiotic segregation increased 2-like protein 11 (PMS2P11) of Homo sapiens (Human).